A 1703-amino-acid chain; its full sequence is Mediator of RNA polymerase II transcription subunit 14 (1703 aa).

Over residues 755–766 the composition is skewed to polar residues; sequence LSQTADLATSSA. A disordered region spans residues 755–781; it reads LSQTADLATSSAGPLLRKDQKPRKRSA.

This sequence belongs to the Mediator complex subunit 14 family. Component of the Mediator complex. Interacts with CDKE-1, HDA19 and LUG. Interacts with PTAC12/HMR/PAP5 and PIF4. In terms of tissue distribution, expressed in roots, stems, developing embryos, young leaf primordia, shoot apical meristems, inflorescence meristems, tapetum in anthers, ovules and floral organ primordia, but not in mature organs.

It is found in the nucleus. In terms of biological role, component of the Mediator complex, a coactivator involved in the regulated transcription of nearly all RNA polymerase II-dependent genes. Mediator functions as a bridge to convey information from gene-specific regulatory proteins to the basal RNA polymerase II transcription machinery. The Mediator complex, having a compact conformation in its free form, is recruited to promoters by direct interactions with regulatory proteins and serves for the assembly of a functional pre-initiation complex with RNA polymerase II and the general transcription factors. Binds to G-box (5'-CACGTG-3')-containing regions of target genes promoters (e.g. IAA29 and IAA19). Involved in defining the duration of cell proliferation. Element of a PIF4/HMR/MED14-dependent thermoresponsive process; required for thermomorphogenetic hypocotyl growth in response to daytime warm temperature elicitation by associating to the promoters of thermoresponsive growth-relevant genes (e.g. mainly involved in biosynthesis and signaling of the phytohormone auxin); this also process implies PIF4 and its transcriptional coactivator PTAC12/HMR/PAP5 to promote the expression of target genes. The sequence is that of Mediator of RNA polymerase II transcription subunit 14 from Arabidopsis thaliana (Mouse-ear cress).